Here is a 637-residue protein sequence, read N- to C-terminus: ATP-dependent zinc metalloprotease FtsH (637 aa).

The Cytoplasmic portion of the chain corresponds to 1–6 (MNNQGR). Residues 7–27 (SILAWAALFIFVILLFNVFQS) form a helical membrane-spanning segment. Residues 28-103 (DGLLGVRNNI…VVPLETRMNT (76 aa)) are Periplasmic-facing. The chain crosses the membrane as a helical span at residues 104-124 (FLGFLISWFPMLLLIGVWVFF). Topologically, residues 125 to 637 (MRQMHGGGKA…TKAQKENIAS (513 aa)) are cytoplasmic. 195-202 (GPPGTGKT) contributes to the ATP binding site. Histidine 417 is a binding site for Zn(2+). Glutamate 418 is a catalytic residue. Histidine 421 and aspartate 495 together coordinate Zn(2+). The disordered stretch occupies residues 617-637 (DKEKLHEKTKTTKAQKENIAS).

The protein in the central section; belongs to the AAA ATPase family. It in the C-terminal section; belongs to the peptidase M41 family. Homohexamer. It depends on Zn(2+) as a cofactor.

It is found in the cell inner membrane. Its function is as follows. Acts as a processive, ATP-dependent zinc metallopeptidase for both cytoplasmic and membrane proteins. Plays a role in the quality control of integral membrane proteins. The chain is ATP-dependent zinc metalloprotease FtsH from Rickettsia typhi (strain ATCC VR-144 / Wilmington).